Here is an 81-residue protein sequence, read N- to C-terminus: uncharacterized protein (81 aa).

This sequence to Synechocystis PCC 6803 ssr2439.

In terms of biological role, may have a regulatory function. This is an uncharacterized protein from Synechococcus elongatus (strain ATCC 33912 / PCC 7942 / FACHB-805) (Anacystis nidulans R2).